The chain runs to 383 residues: Guanine nucleotide-binding protein alpha-1 subunit (383 aa).

The tract at residues Met-1 to Gln-20 is disordered. A lipid anchor (N-myristoyl glycine) is attached at Gly-2. Cys-5 carries S-palmitoyl cysteine lipidation. The G-alpha domain occupies His-37 to Leu-383. The G1 motif stretch occupies residues Lys-40 to Thr-53. Residues Glu-48, Ser-49, Gly-50, Lys-51, Ser-52, Thr-53, Asp-162, Leu-187, Tyr-188, Thr-193, Gly-221, Asn-287, Lys-288, Asp-290, and Ala-355 each coordinate GTP. Ser-52 serves as a coordination point for Mg(2+). Residues Asp-185–Thr-193 are G2 motif. Thr-193 is a binding site for Mg(2+). The G3 motif stretch occupies residues Tyr-214–Arg-223. The segment at Met-283–Asp-290 is G4 motif. Residues Thr-353–Gln-358 form a G5 motif region.

The protein belongs to the G-alpha family. In terms of assembly, g proteins are composed of 3 units; alpha, beta and gamma. The alpha chain contains the guanine nucleotide binding site. Interacts with RGS1, THF1, the pirin protein PRN1, GTG1 and GTG2. Binds to GCR1. May interact with ADT3. No interactions with RACK1A, RACK1B or RACK1C. Interacts with PLDALPHA1. Interacts with CAND2/PMTR1. Mg(2+) is required as a cofactor. As to expression, more abundant in roots and/or leaves.

The protein resides in the cell membrane. Exhibits a fast rate of basal nucleotide exchange. Guanine nucleotide-binding proteins (G proteins) are involved as modulators or transducers in various transmembrane signaling systems. Together with GCR1, may regulate the cell cycle via a signaling cascade that uses phosphatidylinositol-specific phospholipase C (PI-PLC) as an effector and inositol 1,4,5-trisphosphate (IP(3)) as a second messenger. Promotes abscisic acid (ABA) responses in guard cells. Involved in the blue light (BL) signaling. Together with GCR1 and ADT3, required for BL-mediated synthesis of phenylpyruvate and subsequently of phenylalanine (Phe), in etiolated seedlings. Modulates root architecture (e.g. lateral root formation). Negatively regulated by RGS1. In collaboration with CAND2/PMTR1, regulates the melatonin-mediated stomatal closure involving H(2)O(2) and Ca(2+) signals. The polypeptide is Guanine nucleotide-binding protein alpha-1 subunit (Arabidopsis thaliana (Mouse-ear cress)).